The chain runs to 279 residues: Tryptophan 2,3-dioxygenase (279 aa).

Residues 48 to 52, Tyr-110, and Arg-114 contribute to the substrate site; that span reads FIIQH. His-237 contributes to the heme binding site. Thr-251 serves as a coordination point for substrate.

This sequence belongs to the tryptophan 2,3-dioxygenase family. As to quaternary structure, homotetramer. Heme serves as cofactor.

It carries out the reaction L-tryptophan + O2 = N-formyl-L-kynurenine. It participates in amino-acid degradation; L-tryptophan degradation via kynurenine pathway; L-kynurenine from L-tryptophan: step 1/2. In terms of biological role, heme-dependent dioxygenase that catalyzes the oxidative cleavage of the L-tryptophan (L-Trp) pyrrole ring and converts L-tryptophan to N-formyl-L-kynurenine. Catalyzes the oxidative cleavage of the indole moiety. In Bradyrhizobium diazoefficiens (strain JCM 10833 / BCRC 13528 / IAM 13628 / NBRC 14792 / USDA 110), this protein is Tryptophan 2,3-dioxygenase.